Reading from the N-terminus, the 257-residue chain is Triosephosphate isomerase, cytosolic (257 aa).

Substrate contacts are provided by Asn-10 and Lys-12. Residue His-96 is the Electrophile of the active site. Glu-167 serves as the catalytic Proton acceptor.

It belongs to the triosephosphate isomerase family. In terms of assembly, homodimer. Higher levels found in leaves than in roots.

It is found in the cytoplasm. The catalysed reaction is D-glyceraldehyde 3-phosphate = dihydroxyacetone phosphate. The protein operates within carbohydrate biosynthesis; gluconeogenesis. Its pathway is carbohydrate degradation; glycolysis; D-glyceraldehyde 3-phosphate from glycerone phosphate: step 1/1. This is Triosephosphate isomerase, cytosolic (TPI) from Stellaria longipes (Longstalk starwort).